Reading from the N-terminus, the 89-residue chain is Rho beta-crystallin (89 aa).

Histidine 31 is a binding site for substrate.

The protein belongs to the aldo/keto reductase family. As to quaternary structure, monomer.

The polypeptide is Rho beta-crystallin (Lepidodactylus lugubris (Mourning gecko)).